The following is a 397-amino-acid chain: Phosphoglycerate kinase (397 aa).

Substrate-binding positions include 21 to 23 (DFN), R37, 60 to 63 (HLGR), R119, and R152. ATP is bound by residues K203, G294, E325, and 354–357 (GGDS).

The protein belongs to the phosphoglycerate kinase family. Monomer.

It localises to the cytoplasm. The enzyme catalyses (2R)-3-phosphoglycerate + ATP = (2R)-3-phospho-glyceroyl phosphate + ADP. The protein operates within carbohydrate degradation; glycolysis; pyruvate from D-glyceraldehyde 3-phosphate: step 2/5. This chain is Phosphoglycerate kinase, found in Chlorobium phaeobacteroides (strain DSM 266 / SMG 266 / 2430).